We begin with the raw amino-acid sequence, 329 residues long: Ribosomal RNA small subunit methyltransferase C (329 aa).

It belongs to the methyltransferase superfamily. RsmC family. In terms of assembly, monomer.

The protein localises to the cytoplasm. It carries out the reaction guanosine(1207) in 16S rRNA + S-adenosyl-L-methionine = N(2)-methylguanosine(1207) in 16S rRNA + S-adenosyl-L-homocysteine + H(+). In terms of biological role, specifically methylates the guanine in position 1207 of 16S rRNA in the 30S particle. This is Ribosomal RNA small subunit methyltransferase C from Actinobacillus pleuropneumoniae serotype 3 (strain JL03).